Consider the following 420-residue polypeptide: CinA-like protein (420 aa).

Belongs to the CinA family.

The chain is CinA-like protein from Geotalea uraniireducens (strain Rf4) (Geobacter uraniireducens).